The sequence spans 414 residues: MIOREX complex component 10 (414 aa).

A mitochondrion-targeting transit peptide spans Met-1–Gln-29. The Mitochondrial matrix portion of the chain corresponds to Asn-30–Thr-373. The helical transmembrane segment at Phe-374–Phe-394 threads the bilayer. Topologically, residues Tyr-395 to Lys-414 are mitochondrial intermembrane.

The protein belongs to the RMD1/sif2 family. As to quaternary structure, associates with the mitochondrial ribosome.

The protein resides in the mitochondrion inner membrane. Its function is as follows. Component of MIOREX complexes, large expressome-like assemblies of ribosomes with factors involved in all the steps of post-transcriptional gene expression. The protein is MIOREX complex component 10 of Saccharomyces cerevisiae (strain ATCC 204508 / S288c) (Baker's yeast).